Reading from the N-terminus, the 78-residue chain is COP9 signalosome complex subunit 5b (78 aa).

This sequence belongs to the peptidase M67A family. CSN5 subfamily. As to quaternary structure, component of the CSN complex, probably composed of CSN1, CSN2, CSN3, CSN4, CSN5 (CSN5A or CSN5B), CSN6 (CSN6A or CSN6B), CSN7 and CSN8. The cofactor is a divalent metal cation.

It is found in the cytoplasm. It localises to the nucleus. Probable protease subunit of the COP9 signalosome complex (CSN), a complex involved in various cellular and developmental processes such as photomorphogenesis and auxin and jasmonate responses. The CSN complex is an essential regulator of the ubiquitin (Ubl) conjugation pathway by mediating the deneddylation of the cullin subunits of the SCF-type E3 ligase complexes, leading to decrease the Ubl ligase activity of SCF. In the complex, it probably acts as the catalytic center that mediates the cleavage of Nedd8 from cullins. It however has no metalloprotease activity by itself and requires the other subunits of the CSN complex. The CSN complex is involved in repression of photomorphogenesis in darkness by regulating the activity of COP1-containing Ubl ligase complexes. In Brassica oleracea (Wild cabbage), this protein is COP9 signalosome complex subunit 5b (CSN5B).